The primary structure comprises 168 residues: Small ribosomal subunit protein uS5c (168 aa).

The 64-residue stretch at 17–80 (WQERVVQIRR…SDGKKKIVSV (64 aa)) folds into the S5 DRBM domain.

It belongs to the universal ribosomal protein uS5 family. Part of the 30S ribosomal subunit. Contacts protein S4.

It localises to the plastid. The protein resides in the chloroplast. With S4 and S12 plays an important role in translational accuracy. This Rhodomonas salina (Cryptomonas salina) protein is Small ribosomal subunit protein uS5c (rps5).